Reading from the N-terminus, the 499-residue chain is Guanosine-5'-triphosphate,3'-diphosphate pyrophosphatase (499 aa).

This sequence belongs to the GppA/Ppx family. GppA subfamily.

It catalyses the reaction guanosine 3'-diphosphate 5'-triphosphate + H2O = guanosine 3',5'-bis(diphosphate) + phosphate + H(+). It functions in the pathway purine metabolism; ppGpp biosynthesis; ppGpp from GTP: step 2/2. Its function is as follows. Catalyzes the conversion of pppGpp to ppGpp. Guanosine pentaphosphate (pppGpp) is a cytoplasmic signaling molecule which together with ppGpp controls the 'stringent response', an adaptive process that allows bacteria to respond to amino acid starvation, resulting in the coordinated regulation of numerous cellular activities. This chain is Guanosine-5'-triphosphate,3'-diphosphate pyrophosphatase, found in Sodalis glossinidius (strain morsitans).